Reading from the N-terminus, the 1177-residue chain is Lon protease homolog, mitochondrial (1177 aa).

2 disordered regions span residues 72-197 and 353-386; these read RTNS…KSPA and AKKAKSGKTEDSKHDSKVTSKDGKETTEKYDSST. Basic and acidic residues predominate over residues 103–150; the sequence is RGRELWVQEKDKSDKPEKSDKPDKTDKTDKDKPEKQDKDKTDKPEKTK. The span at 154 to 182 shows a compositional bias: low complexity; that stretch reads TPSSTASTGAGEAAAPPSAPPSGSGSSSS. Residues 203 to 505 enclose the Lon N-terminal domain; sequence ILAVPISDRP…RALILLKREH (303 aa). The segment covering 353–383 has biased composition (basic and acidic residues); it reads AKKAKSGKTEDSKHDSKVTSKDGKETTEKYD. 657-664 serves as a coordination point for ATP; it reads GPPGVGKT. A compositionally biased stretch (basic and acidic residues) spans 883–916; sequence EKDKESAEKKTTKSKSKEVNEEPAAKEEKDKATE. The tract at residues 883 to 932 is disordered; sequence EKDKESAEKKTTKSKSKEVNEEPAAKEEKDKATESAESSETKVGTKAPPV. Positions 964–1150 constitute a Lon proteolytic domain; sequence DPPPGVVMGL…QDVYDVVFQG (187 aa). Residues S1056 and K1099 contribute to the active site.

The protein belongs to the peptidase S16 family. Homohexamer or homoheptamer. Organized in a ring with a central cavity.

It is found in the mitochondrion matrix. It catalyses the reaction Hydrolysis of proteins in presence of ATP.. Its function is as follows. ATP-dependent serine protease that mediates the selective degradation of misfolded, unassembled or oxidatively damaged polypeptides as well as certain short-lived regulatory proteins in the mitochondrial matrix. May also have a chaperone function in the assembly of inner membrane protein complexes. Participates in the regulation of mitochondrial gene expression and in the maintenance of the integrity of the mitochondrial genome. Binds to mitochondrial DNA in a site-specific manner. The sequence is that of Lon protease homolog, mitochondrial from Yarrowia lipolytica (strain CLIB 122 / E 150) (Yeast).